The chain runs to 154 residues: RNA-binding protein PAB1135 (154 aa).

In terms of assembly, homodimer in solution.

Its function is as follows. In vitro, binds efficiently double-stranded RNAs in a non-sequence specific manner. This is RNA-binding protein PAB1135 from Pyrococcus abyssi (strain GE5 / Orsay).